Consider the following 416-residue polypeptide: Phosphoglycerate kinase (416 aa).

Substrate is bound by residues 24 to 26 (DLN), R40, 63 to 66 (HLGR), R126, and R166. ATP is bound by residues K216, G304, E335, and 364–367 (GGDS).

Belongs to the phosphoglycerate kinase family. As to quaternary structure, monomer.

The protein localises to the cytoplasm. The catalysed reaction is (2R)-3-phosphoglycerate + ATP = (2R)-3-phospho-glyceroyl phosphate + ADP. It functions in the pathway carbohydrate degradation; glycolysis; pyruvate from D-glyceraldehyde 3-phosphate: step 2/5. The sequence is that of Phosphoglycerate kinase from Mycobacterium leprae (strain Br4923).